The chain runs to 822 residues: General transcription factor 3C polypeptide 4 (822 aa).

Met1 is modified (N-acetylmethionine). The interval 1–41 (MNTADQARVGPADDGPAPSGEEEGEGGGEAGGKEPAADAAP) is disordered. Phosphoserine is present on Ser19. Lys225 participates in a covalent cross-link: Glycyl lysine isopeptide (Lys-Gly) (interchain with G-Cter in SUMO2). Phosphoserine occurs at positions 604 and 611. The disordered stretch occupies residues 608-663 (LVDSPGMGNADDEQQEEGTSSKQVVKQGLQERSKEGDVEEPTDDSLPTTGDAGGRE). Residue Lys629 forms a Glycyl lysine isopeptide (Lys-Gly) (interchain with G-Cter in SUMO2) linkage. Ser652 is modified (phosphoserine).

Belongs to the TFIIIC subunit 4 family. Part of the TFIIIC subcomplex TFIIIC2, consisting of six subunits, GTF3C1, GTF3C2, GTF3C3, GTF3C4, GTF3C5 and GTF3C6. Interacts with BRF1, GTF3C1, GTF3C2, GTF3C5, GTF3C6, POLR3C and POLR3F.

It is found in the nucleus. It catalyses the reaction L-lysyl-[protein] + acetyl-CoA = N(6)-acetyl-L-lysyl-[protein] + CoA + H(+). Functionally, essential for RNA polymerase III to make a number of small nuclear and cytoplasmic RNAs, including 5S RNA, tRNA, and adenovirus-associated (VA) RNA of both cellular and viral origin. Has histone acetyltransferase activity (HAT) with unique specificity for free and nucleosomal H3. May cooperate with GTF3C5 in facilitating the recruitment of TFIIIB and RNA polymerase through direct interactions with BRF1, POLR3C and POLR3F. May be localized close to the A box. The polypeptide is General transcription factor 3C polypeptide 4 (GTF3C4) (Homo sapiens (Human)).